Reading from the N-terminus, the 393-residue chain is Acetyl-CoA acetyltransferase (393 aa).

Cys90 serves as the catalytic Acyl-thioester intermediate. Active-site proton acceptor residues include His349 and Cys379.

The protein belongs to the thiolase-like superfamily. Thiolase family. Homotetramer.

It localises to the cytoplasm. The enzyme catalyses 2 acetyl-CoA = acetoacetyl-CoA + CoA. The protein operates within biopolymer metabolism; poly-(R)-3-hydroxybutanoate biosynthesis. Its pathway is metabolic intermediate biosynthesis; (R)-mevalonate biosynthesis; (R)-mevalonate from acetyl-CoA: step 1/3. This Rhizobium meliloti (strain 1021) (Ensifer meliloti) protein is Acetyl-CoA acetyltransferase.